Here is a 437-residue protein sequence, read N- to C-terminus: Transcription factor AP-2-alpha (437 aa).

Lysine 10 participates in a covalent cross-link: Glycyl lysine isopeptide (Lys-Gly) (interchain with G-Cter in SUMO); alternate. A Glycyl lysine isopeptide (Lys-Gly) (interchain with G-Cter in SUMO2); alternate cross-link involves residue lysine 10. Residues 14 to 107 (CEDRHDGTSN…GQRQSQESGL (94 aa)) form a disordered region. The PPxY motif signature appears at 57–62 (YFPPPY). Low complexity-rich tracts occupy residues 65-74 (IYPQSQDPYS) and 88-101 (QPQP…GQRQ). Residues lysine 177 and lysine 184 each participate in a glycyl lysine isopeptide (Lys-Gly) (interchain with G-Cter in SUMO2) cross-link. At serine 239 the chain carries Phosphoserine; by PKA. An H-S-H (helix-span-helix), dimerization region spans residues 280–410 (RRKAANVTLL…YLTEALKAMD (131 aa)). Residues 414–427 (LSNNPNSHTDNSAK) are compositionally biased toward polar residues. Positions 414–437 (LSNNPNSHTDNSAKSSDKEEKHRK) are disordered. Residues 428–437 (SSDKEEKHRK) are compositionally biased toward basic and acidic residues.

It belongs to the AP-2 family. Binds DNA as a dimer. Can form homodimers or heterodimers with other AP-2 family members. Interacts with WWOX. Interacts with UBE2I. Interacts with RALBP1 in a complex also containing EPN1 and NUMB during interphase and mitosis. Interacts with CITED4. Interacts with KCTD1; this interaction represses transcription activation. Interacts (via C-terminus) with CITED2 (via C-terminus); the interaction stimulates TFAP2A-transcriptional activation. Interacts (via N-terminus) with EP300 (via N-terminus); the interaction requires CITED2. Interacts with KCTD15; this interaction inhibits TFAP2A transcriptional activation. Post-translationally, sumoylated on Lys-10; which inhibits transcriptional activity.

It localises to the nucleus. Its function is as follows. Sequence-specific DNA-binding protein that interacts with inducible viral and cellular enhancer elements to regulate transcription of selected genes. AP-2 factors bind to the consensus sequence 5'-GCCNNNGGC-3' and activate genes involved in a large spectrum of important biological functions including proper eye, face, body wall, limb and neural tube development. They also suppress a number of genes including MCAM/MUC18, C/EBP alpha and MYC. AP-2-alpha is the only AP-2 protein required for early morphogenesis of the lens vesicle. Together with the CITED2 coactivator, stimulates the PITX2 P1 promoter transcription activation. Associates with chromatin to the PITX2 P1 promoter region. The polypeptide is Transcription factor AP-2-alpha (Tfap2a) (Mus musculus (Mouse)).